The following is a 477-amino-acid chain: Glycogen synthase (477 aa).

Position 15 (Lys-15) interacts with ADP-alpha-D-glucose.

The protein belongs to the glycosyltransferase 1 family. Bacterial/plant glycogen synthase subfamily.

It carries out the reaction [(1-&gt;4)-alpha-D-glucosyl](n) + ADP-alpha-D-glucose = [(1-&gt;4)-alpha-D-glucosyl](n+1) + ADP + H(+). It participates in glycan biosynthesis; glycogen biosynthesis. Its function is as follows. Synthesizes alpha-1,4-glucan chains using ADP-glucose. This Anaeromyxobacter dehalogenans (strain 2CP-1 / ATCC BAA-258) protein is Glycogen synthase.